We begin with the raw amino-acid sequence, 537 residues long: Cytochrome P450 monooxygenase claR (537 aa).

A helical membrane pass occupies residues 23–43 (VVTITEVALGIITLYLLGSYI). Residue cysteine 454 coordinates heme.

This sequence belongs to the cytochrome P450 family. It depends on heme as a cofactor.

The protein localises to the membrane. It carries out the reaction (2E)-geranylhydroquinone + reduced [NADPH--hemoprotein reductase] + O2 = wigandol + oxidized [NADPH--hemoprotein reductase] + 2 H2O + H(+). The protein operates within secondary metabolite biosynthesis; terpenoid biosynthesis. Functionally, cytochrome P450 monooxygenase; part of the gene cluster that mediates the biosynthesis of clavilactone A, a meroterpenoid that features a unique benzo-fused ten-membered carbocyclic ring unit with an alpha,beta-epoxy-gamma-lactone moiety, forming an intriguing 10/5/3 tricyclic nested skeleton. ClaR, ClaS and ClaT are sufficient to produce clavilactone A. ClaR acts as a macrocyclase to catalyze the oxidative cyclization of the isopentenyl to the nonterpenoid moieties to form the benzo-fused macrocycle, leading to wigantol. The biosynthesis begins with the prenyltransferase claS that transfers geranyl pyrophosphate (GPP) to hydroquinone to produces geranylhydroquinone. The cytochrome P450 monooxygenase claR then catalyzes the diradical coupling reaction between the intramolecular hydroquinone and allyl moieties to form the benzo-fused ten-membered carbocyclic ring unit of wigantol. Finally the cytochrome P450 monooxygenase claT exquisitely and stereoselectively assembles the alpha,beta-epoxy-gamma-lactone moiety, producing clavilactone A via arnebinol A. In Ampulloclitocybe clavipes (Club foot), this protein is Cytochrome P450 monooxygenase claR.